We begin with the raw amino-acid sequence, 359 residues long: 3-dehydroquinate synthase (359 aa).

NAD(+) is bound by residues 71-76 (DGEQFK), 105-109 (GVIGD), 129-130 (TT), K142, K151, and 169-172 (CLHT). The Zn(2+) site is built by E184, H247, and H264.

The protein belongs to the sugar phosphate cyclases superfamily. Dehydroquinate synthase family. Co(2+) is required as a cofactor. The cofactor is Zn(2+). It depends on NAD(+) as a cofactor.

Its subcellular location is the cytoplasm. The enzyme catalyses 7-phospho-2-dehydro-3-deoxy-D-arabino-heptonate = 3-dehydroquinate + phosphate. It participates in metabolic intermediate biosynthesis; chorismate biosynthesis; chorismate from D-erythrose 4-phosphate and phosphoenolpyruvate: step 2/7. Its function is as follows. Catalyzes the conversion of 3-deoxy-D-arabino-heptulosonate 7-phosphate (DAHP) to dehydroquinate (DHQ). This chain is 3-dehydroquinate synthase, found in Shewanella sp. (strain W3-18-1).